The sequence spans 124 residues: MSGRGKGGKAKGKSKTRSSRAGLQFPVGRIHRLLRKGNYAERVGAGAPVYLAAVMEYLAAEVLELAGNAARDNKKTRIIPRHLQLAIRNDEELNKLLSGVTIAQGGVLPNIQAVLLPKKTTKAK.

A compositionally biased stretch (basic residues) spans 1–18 (MSGRGKGGKAKGKSKTRS). The disordered stretch occupies residues 1-23 (MSGRGKGGKAKGKSKTRSSRAGL). S2 bears the N-acetylserine mark. The residue at position 2 (S2) is a Phosphoserine. Q104 bears the N5-methylglutamine mark.

It belongs to the histone H2A family. As to quaternary structure, the nucleosome is a histone octamer containing two molecules each of H2A, H2B, H3 and H4 assembled in one H3-H4 heterotetramer and two H2A-H2B heterodimers. The octamer wraps approximately 147 bp of DNA. Post-translationally, phosphorylation of Ser-2 directly represses transcription.

It is found in the nucleus. The protein resides in the chromosome. Core component of nucleosome. Nucleosomes wrap and compact DNA into chromatin, limiting DNA accessibility to the cellular machineries which require DNA as a template. Histones thereby play a central role in transcription regulation, DNA repair, DNA replication and chromosomal stability. DNA accessibility is regulated via a complex set of post-translational modifications of histones, also called histone code, and nucleosome remodeling. The sequence is that of Histone H2A from Platynereis dumerilii (Dumeril's clam worm).